Here is a 428-residue protein sequence, read N- to C-terminus: Palmitoyltransferase ZDHHC23-B (428 aa).

Residues 1-82 (MSIMKKRSSR…RVPWISGARQ (82 aa)) are Cytoplasmic-facing. Residues 83-99 (IDVSLIPPLILLPVFLH) traverse the membrane as a helical segment. Topologically, residues 100-105 (IAALHY) are lumenal. A helical transmembrane segment spans residues 106–125 (LLGIIMLTAMPITVLWYYFF). The Cytoplasmic segment spans residues 126-132 (THRKKGR). A helical membrane pass occupies residues 133–153 (TLFFLGLALFSLFYMFYLFLT). Topologically, residues 154–160 (QVVPRGE) are lumenal. The chain crosses the membrane as a helical span at residues 161–181 (VTELQLAVVTAGVALTVIFLM). At 182–294 (LTKRGPGLVR…SCVGLANHRT (113 aa)) the chain is on the cytoplasmic side. Residues 250-300 (NWCAVCKVVRPQRAGHCRICGVCVLRLDHHCVWINSCVGLANHRTFLLTLL) form the DHHC domain. C280 functions as the S-palmitoyl cysteine intermediate in the catalytic mechanism. The chain crosses the membrane as a helical span at residues 295-315 (FLLTLLFFLLTSIYGISLVLA). Over 316-350 (SVCPDQRVLTALFYCPDVYSQYSSALCFTCAWYSS) the chain is Lumenal. A helical transmembrane segment spans residues 351–371 (IVTGGLLHLLLLQILNISLNV). Residues 372–428 (TEREARLALREKSAQRRLWGLIVHTGHYSRGFWSNWTEFLTMTEDTQPAGHKTEDLV) lie on the Cytoplasmic side of the membrane.

Belongs to the DHHC palmitoyltransferase family.

The protein resides in the golgi apparatus membrane. The protein localises to the golgi apparatus. It localises to the trans-Golgi network membrane. The enzyme catalyses L-cysteinyl-[protein] + hexadecanoyl-CoA = S-hexadecanoyl-L-cysteinyl-[protein] + CoA. In terms of biological role, palmitoyltransferase that could catalyze the addition of palmitate onto various protein substrates and be involved in a variety of cellular processes. This is Palmitoyltransferase ZDHHC23-B from Danio rerio (Zebrafish).